A 937-amino-acid chain; its full sequence is Glycine dehydrogenase (decarboxylating) (937 aa).

Lysine 686 carries the N6-(pyridoxal phosphate)lysine modification.

Belongs to the GcvP family. The glycine cleavage system is composed of four proteins: P, T, L and H. Pyridoxal 5'-phosphate serves as cofactor.

The enzyme catalyses N(6)-[(R)-lipoyl]-L-lysyl-[glycine-cleavage complex H protein] + glycine + H(+) = N(6)-[(R)-S(8)-aminomethyldihydrolipoyl]-L-lysyl-[glycine-cleavage complex H protein] + CO2. The glycine cleavage system catalyzes the degradation of glycine. The P protein binds the alpha-amino group of glycine through its pyridoxal phosphate cofactor; CO(2) is released and the remaining methylamine moiety is then transferred to the lipoamide cofactor of the H protein. The sequence is that of Glycine dehydrogenase (decarboxylating) from Mesorhizobium japonicum (strain LMG 29417 / CECT 9101 / MAFF 303099) (Mesorhizobium loti (strain MAFF 303099)).